A 606-amino-acid polypeptide reads, in one-letter code: NADH-ubiquinone oxidoreductase chain 5 (606 aa).

16 helical membrane-spanning segments follow: residues 1 to 21 (MNIFPSLMLTSLFTLTLPIIA), 38 to 58 (NIISFAFIISLIPTMMFIYSG), 87 to 107 (MIFVPVALFVTWSIMEFSIWY), 114 to 134 (ITQFFKYLLMFLITMMILVTA), 140 to 160 (LFIGWEGVGIMSFLLIGWWYG), 171 to 191 (AILYNRIGDIGFIMSMAWFLS), 213 to 233 (LMGLLLAATGKSAQFGLHPWL), 241 to 261 (TPVSALLHSSTMVVAGVFLLI), 273 to 293 (AQTLTLCLGAITTLFTAICAL), 301 to 320 (IIAFSTSSQLGLMIVTIGIN), 325 to 347 (AFLHICTHAFFKAMLFMCSGSII), 366 to 386 (MPFTATSLIIGSFALTGMPFL), 409 to 429 (LLMTLIATSLTAAYSTRMIFF), 457 to 477 (LLIGSIFAGFFISNNIYPTTT), 488 to 508 (LMALIVTILGFALALELSLAT), and 582 to 602 (GLIKLYFLSFLITLTLSLLLL).

This sequence belongs to the complex I subunit 5 family. In terms of assembly, core subunit of respiratory chain NADH dehydrogenase (Complex I) which is composed of 45 different subunits.

The protein resides in the mitochondrion inner membrane. The catalysed reaction is a ubiquinone + NADH + 5 H(+)(in) = a ubiquinol + NAD(+) + 4 H(+)(out). Its function is as follows. Core subunit of the mitochondrial membrane respiratory chain NADH dehydrogenase (Complex I) which catalyzes electron transfer from NADH through the respiratory chain, using ubiquinone as an electron acceptor. Essential for the catalytic activity and assembly of complex I. This is NADH-ubiquinone oxidoreductase chain 5 (MT-ND5) from Rhinoceros unicornis (Greater Indian rhinoceros).